The sequence spans 119 residues: MAFDPASLTFDANGLIPAVAQDHATGEVLMMAWMNAEAVARTVETGRVTYWSRSRQAFWVKGETSGHVQRLIELRIDCDRDCLLLLIEQEGPACHTNRRSCFYTALREGEERIILDPMV.

Asp77 contributes to the Mg(2+) binding site. Zn(2+) is bound at residue Cys78. The Mg(2+) site is built by Asp79 and Asp81. Cys94 and Cys101 together coordinate Zn(2+).

The protein belongs to the PRA-CH family. Homodimer. Requires Mg(2+) as cofactor. Zn(2+) is required as a cofactor.

It localises to the cytoplasm. The catalysed reaction is 1-(5-phospho-beta-D-ribosyl)-5'-AMP + H2O = 1-(5-phospho-beta-D-ribosyl)-5-[(5-phospho-beta-D-ribosylamino)methylideneamino]imidazole-4-carboxamide. The protein operates within amino-acid biosynthesis; L-histidine biosynthesis; L-histidine from 5-phospho-alpha-D-ribose 1-diphosphate: step 3/9. Its function is as follows. Catalyzes the hydrolysis of the adenine ring of phosphoribosyl-AMP. This Cereibacter sphaeroides (strain ATCC 17029 / ATH 2.4.9) (Rhodobacter sphaeroides) protein is Phosphoribosyl-AMP cyclohydrolase.